The following is a 607-amino-acid chain: NADH-ubiquinone oxidoreductase chain 5 (607 aa).

16 helical membrane passes run Ile-3 to Met-23, Tyr-35 to Phe-55, Phe-84 to Ser-104, Phe-117 to Met-137, Leu-140 to Gly-160, Ala-171 to Leu-191, Leu-210 to His-230, Thr-241 to Val-261, Phe-272 to Ala-292, Ile-301 to Asn-320, Leu-324 to Gly-344, Ile-365 to Phe-385, Asn-405 to Ile-427, Leu-457 to Ile-477, Met-482 to Leu-502, and Leu-586 to Leu-606.

The protein belongs to the complex I subunit 5 family. In terms of assembly, core subunit of respiratory chain NADH dehydrogenase (Complex I) which is composed of 45 different subunits.

Its subcellular location is the mitochondrion inner membrane. It carries out the reaction a ubiquinone + NADH + 5 H(+)(in) = a ubiquinol + NAD(+) + 4 H(+)(out). Core subunit of the mitochondrial membrane respiratory chain NADH dehydrogenase (Complex I) which catalyzes electron transfer from NADH through the respiratory chain, using ubiquinone as an electron acceptor. Essential for the catalytic activity and assembly of complex I. This Mus musculus (Mouse) protein is NADH-ubiquinone oxidoreductase chain 5 (Mtnd5).